A 297-amino-acid polypeptide reads, in one-letter code: Alpha-tubulin N-acetyltransferase 1 (297 aa).

The N-acetyltransferase domain maps to 1–184 (MDFPYDLNAL…NNFVVFAGFF (184 aa)). Acetyl-CoA contacts are provided by residues 118–131 (FYVT…GYGS) and 154–163 (SPKFLSFLEK). Positions 226-297 (FVRPGGPPHS…SLNRSRLSFH (72 aa)) are disordered. The span at 230–240 (GGPPHSPPLLP) shows a compositional bias: pro residues. Low complexity predominate over residues 241–264 (SSPQSRSLSVGSSPSRAPLRPAAA). 2 stretches are compositionally biased toward polar residues: residues 266 to 278 (VLQQ…SPLN) and 286 to 297 (TSSLNRSRLSFH).

It belongs to the acetyltransferase ATAT1 family. As to quaternary structure, monomer.

It is found in the cytoplasm. The protein resides in the membrane. Its subcellular location is the clathrin-coated pit. It localises to the cell junction. The protein localises to the focal adhesion. It is found in the cell projection. The protein resides in the axon. Its subcellular location is the cytoskeleton. It localises to the spindle. The catalysed reaction is L-lysyl-[alpha-tubulin] + acetyl-CoA = N(6)-acetyl-L-lysyl-[alpha-tubulin] + CoA + H(+). Functionally, specifically acetylates 'Lys-40' in alpha-tubulin on the lumenal side of microtubules. Promotes microtubule destabilization and accelerates microtubule dynamics; this activity may be independent of acetylation activity. Acetylates alpha-tubulin with a slow enzymatic rate, due to a catalytic site that is not optimized for acetyl transfer. Enters the microtubule through each end and diffuses quickly throughout the lumen of microtubules. Acetylates only long/old microtubules because of its slow acetylation rate since it does not have time to act on dynamically unstable microtubules before the enzyme is released. May be involved in neuron development. Acetylates alpha-tubulin in neurons, but not in cilia. In Danio rerio (Zebrafish), this protein is Alpha-tubulin N-acetyltransferase 1.